The chain runs to 632 residues: 2-oxoacid:ferredoxin oxidoreductase subunit alpha (632 aa).

The YPITP motif signature appears at 253–257 (YPITP). Residues Thr256 and Arg344 each contribute to the substrate site.

As to quaternary structure, heterodimer composed of an alpha and a beta subunit.

It is found in the cytoplasm. The catalysed reaction is a 2-oxocarboxylate + 2 oxidized [2Fe-2S]-[ferredoxin] + CoA = an acyl-CoA + 2 reduced [2Fe-2S]-[ferredoxin] + CO2 + H(+). In terms of biological role, catalyzes the coenzyme A-dependent oxidative decarboxylation of different 2-oxoacids such as 2-oxoglutarate, pyruvate and 2-oxobutyrate to form their CoA derivatives. This Sulfolobus sp protein is 2-oxoacid:ferredoxin oxidoreductase subunit alpha.